The primary structure comprises 270 residues: Glutamate racemase (270 aa).

Residues 7–8 (DS) and 39–40 (YG) each bind substrate. The active-site Proton donor/acceptor is the Cys70. 71–72 (NT) contributes to the substrate binding site. The active-site Proton donor/acceptor is Cys194. 195–196 (TH) contributes to the substrate binding site.

This sequence belongs to the aspartate/glutamate racemases family.

It carries out the reaction L-glutamate = D-glutamate. The protein operates within cell wall biogenesis; peptidoglycan biosynthesis. Functionally, provides the (R)-glutamate required for cell wall biosynthesis. This Jannaschia sp. (strain CCS1) protein is Glutamate racemase.